Here is a 57-residue protein sequence, read N- to C-terminus: Ribosome modulation factor (57 aa).

Residues 1–28 are disordered; that stretch reads MKRQKRDRLERAQSQGYKAGLNGRSHDE.

This sequence belongs to the ribosome modulation factor family.

It localises to the cytoplasm. During stationary phase, converts 70S ribosomes to an inactive dimeric form (100S ribosomes). In Vibrio cholerae serotype O1 (strain MJ-1236), this protein is Ribosome modulation factor.